Here is a 692-residue protein sequence, read N- to C-terminus: Protein artemis (692 aa).

T380 is subject to Phosphothreonine. S385 carries the phosphoserine modification. Disordered stretches follow at residues 504–555 and 640–664; these read LENF…DSQS and STNADSQSSSDFEVPSTPEAELPKR. Residues 506–520 show a composition bias toward polar residues; it reads NFPSSTVAGGSQSPK. A compositionally biased stretch (low complexity) spans 530–543; that stretch reads THISSQNSSQSTHI. 2 stretches are compositionally biased toward polar residues: residues 544–555 and 640–650; these read TEQGSQGWDSQS and STNADSQSSSD. S645 carries the post-translational modification Phosphoserine; by ATM.

Belongs to the DNA repair metallo-beta-lactamase (DRMBL) family. Interacts with LIG4; the interaction is direct. Interacts with ATM. Interacts with BRCA1. Interacts with PRKDC. Interacts with TP53BP1. Also exhibits ATM- and phosphorylation-dependent interaction with the MRN complex, composed of MRE11, RAD50, and NBN. In terms of processing, phosphorylation on undefined residues by PRKDC may stimulate endonucleolytic activity on 5' and 3' hairpins and overhangs. PRKDC must remain present, even after phosphorylation, for efficient hairpin opening. Also phosphorylated by ATM in response to ionizing radiation (IR) and by ATR in response to ultraviolet (UV) radiation. In terms of tissue distribution, ubiquitously expressed, with highest levels in the kidney, lung, pancreas and placenta (at the mRNA level). Expression is not increased in thymus or bone marrow, sites of V(D)J recombination.

It is found in the nucleus. Functionally, nuclease involved in DNA non-homologous end joining (NHEJ); required for double-strand break repair and V(D)J recombination. Required for V(D)J recombination, the process by which exons encoding the antigen-binding domains of immunoglobulins and T-cell receptor proteins are assembled from individual V, (D), and J gene segments. V(D)J recombination is initiated by the lymphoid specific RAG endonuclease complex, which generates site specific DNA double strand breaks (DSBs). These DSBs present two types of DNA end structures: hairpin sealed coding ends and phosphorylated blunt signal ends. These ends are independently repaired by the non homologous end joining (NHEJ) pathway to form coding and signal joints respectively. This protein exhibits single-strand specific 5'-3' exonuclease activity in isolation and acquires endonucleolytic activity on 5' and 3' hairpins and overhangs when in a complex with PRKDC. The latter activity is required specifically for the resolution of closed hairpins prior to the formation of the coding joint. Also required for the repair of complex DSBs induced by ionizing radiation, which require substantial end-processing prior to religation by NHEJ. The chain is Protein artemis from Homo sapiens (Human).